We begin with the raw amino-acid sequence, 180 residues long: ATP synthase subunit delta, chloroplastic (180 aa).

It belongs to the ATPase delta chain family. In terms of assembly, F-type ATPases have 2 components, F(1) - the catalytic core - and F(0) - the membrane proton channel. F(1) has five subunits: alpha(3), beta(3), gamma(1), delta(1), epsilon(1). CF(0) has four main subunits: a(1), b(1), b'(1) and c(10-14). The alpha and beta chains form an alternating ring which encloses part of the gamma chain. F(1) is attached to F(0) by a central stalk formed by the gamma and epsilon chains, while a peripheral stalk is formed by the delta, b and b' chains.

The protein resides in the plastid. The protein localises to the chloroplast thylakoid membrane. In terms of biological role, f(1)F(0) ATP synthase produces ATP from ADP in the presence of a proton or sodium gradient. F-type ATPases consist of two structural domains, F(1) containing the extramembraneous catalytic core and F(0) containing the membrane proton channel, linked together by a central stalk and a peripheral stalk. During catalysis, ATP synthesis in the catalytic domain of F(1) is coupled via a rotary mechanism of the central stalk subunits to proton translocation. This protein is part of the stalk that links CF(0) to CF(1). It either transmits conformational changes from CF(0) to CF(1) or is implicated in proton conduction. The protein is ATP synthase subunit delta, chloroplastic of Emiliania huxleyi (Coccolithophore).